A 574-amino-acid chain; its full sequence is Methionine--tRNA ligase (574 aa).

The short motif at 11–21 (PYINGIKHLGN) is the 'HIGH' region element. Zn(2+) is bound by residues cysteine 143, cysteine 146, cysteine 156, and cysteine 159. Residues 345 to 349 (KFSTS) carry the 'KMSKS' region motif. An ATP-binding site is contributed by threonine 348.

It belongs to the class-I aminoacyl-tRNA synthetase family. MetG type 1 subfamily. In terms of assembly, monomer. It depends on Zn(2+) as a cofactor.

Its subcellular location is the cytoplasm. The enzyme catalyses tRNA(Met) + L-methionine + ATP = L-methionyl-tRNA(Met) + AMP + diphosphate. Is required not only for elongation of protein synthesis but also for the initiation of all mRNA translation through initiator tRNA(fMet) aminoacylation. This chain is Methionine--tRNA ligase, found in Streptomyces avermitilis (strain ATCC 31267 / DSM 46492 / JCM 5070 / NBRC 14893 / NCIMB 12804 / NRRL 8165 / MA-4680).